Reading from the N-terminus, the 796-residue chain is Serine/threonine-protein kinase ATG1 (796 aa).

One can recognise a Protein kinase domain in the interval 9–304 (YVVGAEIGRG…FQEFFNDPVI (296 aa)). ATP contacts are provided by residues 15 to 23 (IGRGSFANV) and Lys38. The Proton acceptor role is filled by Asp155. Acidic residues predominate over residues 360-370 (LEEEDEEEDQD). Disordered stretches follow at residues 360-382 (LEEE…IQHM), 389-408 (LLNK…RREL), and 450-480 (PYTR…KVPI). Polar residues predominate over residues 389-403 (LLNKTTQKQTEVQSQ). The segment covering 453–470 (RRYSSSSRSSSTGSNQRR) has biased composition (low complexity).

This sequence belongs to the protein kinase superfamily. Ser/Thr protein kinase family. APG1/unc-51/ULK1 subfamily. In terms of assembly, homodimer. Forms a ternary complex with ATG13 and ATG17.

The protein resides in the cytoplasm. The protein localises to the preautophagosomal structure membrane. The enzyme catalyses L-seryl-[protein] + ATP = O-phospho-L-seryl-[protein] + ADP + H(+). It catalyses the reaction L-threonyl-[protein] + ATP = O-phospho-L-threonyl-[protein] + ADP + H(+). Its function is as follows. Serine/threonine protein kinase involved in the cytoplasm to vacuole transport (Cvt) and found to be essential in autophagy, where it is required for the formation of autophagosomes. Involved in the clearance of protein aggregates which cannot be efficiently cleared by the proteasome. Required for selective autophagic degradation of the nucleus (nucleophagy) as well as for mitophagy which contributes to regulate mitochondrial quantity and quality by eliminating the mitochondria to a basal level to fulfill cellular energy requirements and preventing excess ROS production. Also involved in endoplasmic reticulum-specific autophagic process, in selective removal of ER-associated degradation (ERAD) substrates. Plays a key role in ATG9 and ATG23 cycling through the pre-autophagosomal structure and is necessary to promote ATG18 binding to ATG9 through phosphorylation of ATG9. Catalyzes phosphorylation of ATG4, decreasing the interaction between ATG4 and ATG8 and impairing deconjugation of PE-conjugated forms of ATG8. The polypeptide is Serine/threonine-protein kinase ATG1 (Komagataella pastoris (Yeast)).